We begin with the raw amino-acid sequence, 327 residues long: Phenylalanine--tRNA ligase alpha subunit (327 aa).

A Mg(2+)-binding site is contributed by glutamate 252.

This sequence belongs to the class-II aminoacyl-tRNA synthetase family. Phe-tRNA synthetase alpha subunit type 1 subfamily. In terms of assembly, tetramer of two alpha and two beta subunits. It depends on Mg(2+) as a cofactor.

The protein localises to the cytoplasm. The catalysed reaction is tRNA(Phe) + L-phenylalanine + ATP = L-phenylalanyl-tRNA(Phe) + AMP + diphosphate + H(+). This chain is Phenylalanine--tRNA ligase alpha subunit, found in Escherichia coli O127:H6 (strain E2348/69 / EPEC).